A 278-amino-acid polypeptide reads, in one-letter code: Large ribosomal subunit protein uL2 (278 aa).

Disordered stretches follow at residues 1 to 59 and 222 to 278; these read MAIR…GGHK and RGAA…NKKR. Positions 16-27 are enriched in polar residues; the sequence is SSVSEFSEITRS. 2 stretches are compositionally biased toward basic residues: residues 45–59 and 269–278; these read VHGH…GGHK and VRRRRPNKKR.

It belongs to the universal ribosomal protein uL2 family. As to quaternary structure, part of the 50S ribosomal subunit. Forms a bridge to the 30S subunit in the 70S ribosome.

In terms of biological role, one of the primary rRNA binding proteins. Required for association of the 30S and 50S subunits to form the 70S ribosome, for tRNA binding and peptide bond formation. It has been suggested to have peptidyltransferase activity; this is somewhat controversial. Makes several contacts with the 16S rRNA in the 70S ribosome. In Corynebacterium urealyticum (strain ATCC 43042 / DSM 7109), this protein is Large ribosomal subunit protein uL2.